A 162-amino-acid polypeptide reads, in one-letter code: MVKIIGLDPGISKTGWAIISLNEKNNIEFLGGGTISTDGKLGTGERLHIIFEQLKKVISLYSPNEAAVEKIFVNKNPKSSLTLGYARGVVILALKITKLTMNEYDANYVKKSITGNGHADKDQIIFMVKQIVKNLNIKCHHAADALAVAICHAYTKGSCFVE.

Catalysis depends on residues D8, E69, and H141. 3 residues coordinate Mg(2+): D8, E69, and H141.

The protein belongs to the RuvC family. Homodimer which binds Holliday junction (HJ) DNA. The HJ becomes 2-fold symmetrical on binding to RuvC with unstacked arms; it has a different conformation from HJ DNA in complex with RuvA. In the full resolvosome a probable DNA-RuvA(4)-RuvB(12)-RuvC(2) complex forms which resolves the HJ. The cofactor is Mg(2+).

Its subcellular location is the cytoplasm. It catalyses the reaction Endonucleolytic cleavage at a junction such as a reciprocal single-stranded crossover between two homologous DNA duplexes (Holliday junction).. Its function is as follows. The RuvA-RuvB-RuvC complex processes Holliday junction (HJ) DNA during genetic recombination and DNA repair. Endonuclease that resolves HJ intermediates. Cleaves cruciform DNA by making single-stranded nicks across the HJ at symmetrical positions within the homologous arms, yielding a 5'-phosphate and a 3'-hydroxyl group; requires a central core of homology in the junction. The consensus cleavage sequence is 5'-(A/T)TT(C/G)-3'. Cleavage occurs on the 3'-side of the TT dinucleotide at the point of strand exchange. HJ branch migration catalyzed by RuvA-RuvB allows RuvC to scan DNA until it finds its consensus sequence, where it cleaves and resolves the cruciform DNA. The chain is Crossover junction endodeoxyribonuclease RuvC from Wolbachia sp. subsp. Drosophila simulans (strain wRi).